A 275-amino-acid polypeptide reads, in one-letter code: Aliphatic sulfonates import ATP-binding protein SsuB 1 (275 aa).

Residues 34-260 (ISLTGLEKSF…RHGHPGLCEL (227 aa)) form the ABC transporter domain. ATP is bound at residue 66-73 (GKSGCGKS).

This sequence belongs to the ABC transporter superfamily. Aliphatic sulfonates importer (TC 3.A.1.17.2) family. As to quaternary structure, the complex is composed of two ATP-binding proteins (SsuB), two transmembrane proteins (SsuC) and a solute-binding protein (SsuA).

It is found in the cell inner membrane. The enzyme catalyses ATP + H2O + aliphatic sulfonate-[sulfonate-binding protein]Side 1 = ADP + phosphate + aliphatic sulfonateSide 2 + [sulfonate-binding protein]Side 1.. Its function is as follows. Part of the ABC transporter complex SsuABC involved in aliphatic sulfonates import. Responsible for energy coupling to the transport system. This chain is Aliphatic sulfonates import ATP-binding protein SsuB 1, found in Rhizobium johnstonii (strain DSM 114642 / LMG 32736 / 3841) (Rhizobium leguminosarum bv. viciae).